The chain runs to 876 residues: Alanine--tRNA ligase (876 aa).

Zn(2+) contacts are provided by histidine 560, histidine 564, cysteine 662, and histidine 666.

The protein belongs to the class-II aminoacyl-tRNA synthetase family. Zn(2+) serves as cofactor.

It is found in the cytoplasm. The catalysed reaction is tRNA(Ala) + L-alanine + ATP = L-alanyl-tRNA(Ala) + AMP + diphosphate. Functionally, catalyzes the attachment of alanine to tRNA(Ala) in a two-step reaction: alanine is first activated by ATP to form Ala-AMP and then transferred to the acceptor end of tRNA(Ala). Also edits incorrectly charged Ser-tRNA(Ala) and Gly-tRNA(Ala) via its editing domain. This Synechococcus sp. (strain ATCC 27144 / PCC 6301 / SAUG 1402/1) (Anacystis nidulans) protein is Alanine--tRNA ligase.